The following is a 163-amino-acid chain: Phosphopantetheine adenylyltransferase (163 aa).

Residue Thr-11 coordinates substrate. ATP contacts are provided by residues Thr-11–Phe-12 and His-19. The substrate site is built by Lys-43, Leu-75, and Arg-89. ATP-binding positions include Gly-90 to Arg-92, Glu-100, and Tyr-125 to Thr-131.

Belongs to the bacterial CoaD family. As to quaternary structure, homohexamer. Mg(2+) serves as cofactor.

The protein localises to the cytoplasm. The enzyme catalyses (R)-4'-phosphopantetheine + ATP + H(+) = 3'-dephospho-CoA + diphosphate. The protein operates within cofactor biosynthesis; coenzyme A biosynthesis; CoA from (R)-pantothenate: step 4/5. Reversibly transfers an adenylyl group from ATP to 4'-phosphopantetheine, yielding dephospho-CoA (dPCoA) and pyrophosphate. The polypeptide is Phosphopantetheine adenylyltransferase (Aromatoleum aromaticum (strain DSM 19018 / LMG 30748 / EbN1) (Azoarcus sp. (strain EbN1))).